Consider the following 622-residue polypeptide: 1,4-alpha-glucan branching enzyme GlgB (622 aa).

The active-site Nucleophile is the Asp306. The active-site Proton donor is Glu358. Residues 581–606 (YGGSNVGNRGAVHSDPVEKHGHSHSL) are disordered.

The protein belongs to the glycosyl hydrolase 13 family. GlgB subfamily. As to quaternary structure, monomer.

It carries out the reaction Transfers a segment of a (1-&gt;4)-alpha-D-glucan chain to a primary hydroxy group in a similar glucan chain.. The protein operates within glycan biosynthesis; glycogen biosynthesis. In terms of biological role, catalyzes the formation of the alpha-1,6-glucosidic linkages in glycogen by scission of a 1,4-alpha-linked oligosaccharide from growing alpha-1,4-glucan chains and the subsequent attachment of the oligosaccharide to the alpha-1,6 position. This is 1,4-alpha-glucan branching enzyme GlgB from Salinibacter ruber (strain DSM 13855 / M31).